Consider the following 388-residue polypeptide: Branched-chain-amino-acid aminotransferase 2, chloroplastic (388 aa).

The transit peptide at methionine 1–threonine 22 directs the protein to the chloroplast. Lysine 235 is modified (N6-(pyridoxal phosphate)lysine).

It belongs to the class-IV pyridoxal-phosphate-dependent aminotransferase family. Requires pyridoxal 5'-phosphate as cofactor.

The protein localises to the plastid. Its subcellular location is the chloroplast. The enzyme catalyses L-leucine + 2-oxoglutarate = 4-methyl-2-oxopentanoate + L-glutamate. It carries out the reaction L-isoleucine + 2-oxoglutarate = (S)-3-methyl-2-oxopentanoate + L-glutamate. The catalysed reaction is L-valine + 2-oxoglutarate = 3-methyl-2-oxobutanoate + L-glutamate. It participates in amino-acid biosynthesis; L-isoleucine biosynthesis; L-isoleucine from 2-oxobutanoate: step 4/4. The protein operates within amino-acid biosynthesis; L-leucine biosynthesis; L-leucine from 3-methyl-2-oxobutanoate: step 4/4. Its pathway is amino-acid biosynthesis; L-valine biosynthesis; L-valine from pyruvate: step 4/4. Its function is as follows. Converts 2-oxo acids to branched-chain amino acids. Shows activity with L-Leu, L-Ile and L-Val as amino donors and 2-oxoglutarate as an amino acceptor, but no activity for D-isomers of Leu, Ile, Val, Asp, Glu or Ala. The chain is Branched-chain-amino-acid aminotransferase 2, chloroplastic (BCAT2) from Arabidopsis thaliana (Mouse-ear cress).